Reading from the N-terminus, the 136-residue chain is Acidic phospholipase A2 EC-I (136 aa).

Positions 1–16 (MKTLWIVAVWLIAVEG) are cleaved as a signal peptide. 7 disulfide bridges follow: C42–C129, C44–C60, C59–C111, C65–C136, C66–C104, C73–C97, and C91–C102. Ca(2+) is bound by residues Y43, G45, and G47. The active site involves H63. D64 contacts Ca(2+). The active site involves D105. Residues 112–133 (LGENVNTYDKKYKSYEDCTEEV) form a may be responsible for inhibition of the platelet-aggregation activity region.

Belongs to the phospholipase A2 family. Group II subfamily. D49 sub-subfamily. In terms of assembly, monomer. Ca(2+) is required as a cofactor. As to expression, expressed by the venom gland.

It localises to the secreted. It catalyses the reaction a 1,2-diacyl-sn-glycero-3-phosphocholine + H2O = a 1-acyl-sn-glycero-3-phosphocholine + a fatty acid + H(+). Snake venom phospholipase A2 (PLA2) that inhibits human platelet aggregation induced by ADP, collagen and epinephrin (possibly by binding the platelet receptor alpha-IIb/beta-III) and induces mild edema in the foot pads of mice. PLA2 catalyzes the calcium-dependent hydrolysis of the 2-acyl groups in 3-sn-phosphoglycerides. This Echis carinatus (Saw-scaled viper) protein is Acidic phospholipase A2 EC-I.